A 442-amino-acid chain; its full sequence is O-methyltransferase pgmB (442 aa).

D291 lines the S-adenosyl-L-methionine pocket. H341 functions as the Proton acceptor in the catalytic mechanism.

It belongs to the class I-like SAM-binding methyltransferase superfamily. Cation-independent O-methyltransferase family.

The protein operates within pigment biosynthesis. It participates in secondary metabolite biosynthesis. Its function is as follows. O-methyltransferase; part of the gene cluster that mediates the biosynthesis of pleosporalin A, ascomycone A, as well as a third cryptic naphthoquinone derived pigment, all responsible for the coloration of conidia. Specifically methylates position C-6 of the pgmA product 3-acetonyl-1,6,8-trihydroxy-2-naphthaldehyde to yield fusarubinaldehyde. The pathway begins with the biosynthesis of the cyclized heptaketide 3-acetonyl-1,6,8-trihydroxy-2-naphthaldehyde by the NR-PKS pgmA. The C-6 hydroxyl group is further methylated by the O-methyltransferase pgmB to yield fusarubinaldehyde which is in turn oxidized by the cytochrome P450 monooxygenase pgmC at C-9. The C-1 hydroxyl group is then methylated spontaneously. Although pgmE, pgmD and pgmH are essential for the production of pleosporalin A, it is not the case for the 2 other final products and it remains difficult to assign a specific function to each enzyme. PgmF and pgmG seem not to be involved in pigment biosynthesis although they were regulated by the cluster-specific transcription factor pgmR. In Aspergillus terreus, this protein is O-methyltransferase pgmB.